The chain runs to 213 residues: Urease accessory protein UreG (213 aa).

10–17 is a binding site for GTP; that stretch reads GPVGSGKT.

This sequence belongs to the SIMIBI class G3E GTPase family. UreG subfamily. As to quaternary structure, homodimer. UreD, UreF and UreG form a complex that acts as a GTP-hydrolysis-dependent molecular chaperone, activating the urease apoprotein by helping to assemble the nickel containing metallocenter of UreC. The UreE protein probably delivers the nickel.

It localises to the cytoplasm. Facilitates the functional incorporation of the urease nickel metallocenter. This process requires GTP hydrolysis, probably effectuated by UreG. The polypeptide is Urease accessory protein UreG (Deinococcus radiodurans (strain ATCC 13939 / DSM 20539 / JCM 16871 / CCUG 27074 / LMG 4051 / NBRC 15346 / NCIMB 9279 / VKM B-1422 / R1)).